The primary structure comprises 144 residues: Peroxisomal membrane protein PEX34 (144 aa).

The next 3 helical transmembrane spans lie at 18 to 30, 52 to 73, and 109 to 131; these read NIWS…LDFF, VWLC…KLCK, and TAAL…RLFK.

As to quaternary structure, homooligomer. Interacts with PEX11, PEX25 and PEX27.

The protein resides in the peroxisome membrane. Its function is as follows. In concert with the three peroxisome divisional factors, PEX11, PEX25 and PEX27, controls peroxisome morphology and abundance under conditions of peroxisome proliferation. Maintains mature peroxisomes in actively dividing cells. In Saccharomyces cerevisiae (strain ATCC 204508 / S288c) (Baker's yeast), this protein is Peroxisomal membrane protein PEX34 (PEX34).